A 115-amino-acid chain; its full sequence is Ribosome-binding factor A (115 aa).

This sequence belongs to the RbfA family. In terms of assembly, monomer. Binds 30S ribosomal subunits, but not 50S ribosomal subunits or 70S ribosomes.

The protein localises to the cytoplasm. In terms of biological role, one of several proteins that assist in the late maturation steps of the functional core of the 30S ribosomal subunit. Associates with free 30S ribosomal subunits (but not with 30S subunits that are part of 70S ribosomes or polysomes). Required for efficient processing of 16S rRNA. May interact with the 5'-terminal helix region of 16S rRNA. This is Ribosome-binding factor A from Staphylococcus carnosus (strain TM300).